The primary structure comprises 318 residues: Ribosomal RNA small subunit methyltransferase A (318 aa).

S-adenosyl-L-methionine contacts are provided by N40, V42, G67, E88, D118, and N137. A compositionally biased stretch (basic and acidic residues) spans 296-305 (ADRGGSDREG). Residues 296–318 (ADRGGSDREGTSPPTAGQGAPAC) form a disordered region.

Belongs to the class I-like SAM-binding methyltransferase superfamily. rRNA adenine N(6)-methyltransferase family. RsmA subfamily.

The protein resides in the cytoplasm. The catalysed reaction is adenosine(1518)/adenosine(1519) in 16S rRNA + 4 S-adenosyl-L-methionine = N(6)-dimethyladenosine(1518)/N(6)-dimethyladenosine(1519) in 16S rRNA + 4 S-adenosyl-L-homocysteine + 4 H(+). Its function is as follows. Specifically dimethylates two adjacent adenosines (A1518 and A1519) in the loop of a conserved hairpin near the 3'-end of 16S rRNA in the 30S particle. May play a critical role in biogenesis of 30S subunits. This Mycobacterium avium (strain 104) protein is Ribosomal RNA small subunit methyltransferase A.